A 528-amino-acid polypeptide reads, in one-letter code: Na(+)/H(+) antiporter NhaB (528 aa).

The next 10 helical transmembrane spans lie at 11–31 (VNFL…FLVI), 67–87 (PGGL…SQVL), 98–118 (LLLI…LFVF), 140–160 (AFLS…AVGI), 240–260 (FFIR…LTCV), 311–331 (LVAG…SVII), 350–370 (EEAL…GVII), 391–411 (LVVF…VFVG), 449–469 (ATPN…APLI), and 476–496 (MVIM…VTIE).

Belongs to the NhaB Na(+)/H(+) (TC 2.A.34) antiporter family.

The protein resides in the cell inner membrane. It carries out the reaction 2 Na(+)(in) + 3 H(+)(out) = 2 Na(+)(out) + 3 H(+)(in). Its function is as follows. Na(+)/H(+) antiporter that extrudes sodium in exchange for external protons. This Shewanella denitrificans (strain OS217 / ATCC BAA-1090 / DSM 15013) protein is Na(+)/H(+) antiporter NhaB.